Consider the following 981-residue polypeptide: Ubiquitin carboxyl-terminal hydrolase 15 (981 aa).

Ala2 carries the post-translational modification N-acetylalanine. Residues 2–223 (AEGGAADLDT…KNEDGTWPRG (222 aa)) are mediates interaction with SART3. In terms of domain architecture, DUSP spans 7-118 (ADLDTQRSDI…GQEPIARKVV (112 aa)). Residues 216 to 237 (EDGTWPRGPSTPKSPGASNFST) form a disordered region. Thr226 bears the Phosphothreonine mark. Positions 226-237 (TPKSPGASNFST) are enriched in polar residues. Ser229 and Ser242 each carry phosphoserine. Residues 289 to 933 (CGLSNLGNTC…AAYVLFYQRQ (645 aa)) enclose the USP domain. The active-site Nucleophile is Cys298. Residue Thr602 is modified to Phosphothreonine. Residues 633–694 (CCEDQNINGN…GGDNDSENGL (62 aa)) are disordered. Over residues 656 to 673 (METDEPDDESSQDQELPS) the composition is skewed to acidic residues. His891 serves as the catalytic Proton acceptor. The segment at 952–981 (SAATGIPLESDEDSNDNDNDLENENCMHTN) is disordered. The span at 960-974 (ESDEDSNDNDNDLEN) shows a compositional bias: acidic residues. Phosphoserine is present on residues Ser961 and Ser965.

The protein belongs to the peptidase C19 family. A homodimer structure has been reported; however it is unclear whether the protein form a homodimer in vivo. Identified in a complex with the COP9 signalosome complex (CSN). Interacts with SMAD1, SMAD2 and SMAD3; the interaction is direct. Forms a complex with SMURF2 and SMAD7. Interacts with TGFBR1. Interacts with SART3; the interaction is direct. May interact with RNF20 and RNF40. May interact with PRKN. Interacts with INCA1. Post-translationally, phosphorylated. Phosphorylation protects against ubiquitination and subsequent degradation by the proteasome. Ubiquitinated, leading to degradation by the proteasome. As to expression, widely expressed with highest levels in the brain and spleen, and lowest levels in the muscles (at protein level). In the midbrain, strong expression in neurons including the dopaminergic neurons (at protein level). Widely expressed with highest levels in testis, heart and liver.

It localises to the cytoplasm. The protein localises to the nucleus. The protein resides in the mitochondrion. The enzyme catalyses Thiol-dependent hydrolysis of ester, thioester, amide, peptide and isopeptide bonds formed by the C-terminal Gly of ubiquitin (a 76-residue protein attached to proteins as an intracellular targeting signal).. In terms of biological role, hydrolase that removes conjugated ubiquitin from target proteins and regulates various pathways such as the TGF-beta receptor signaling, NF-kappa-B and RNF41/NRDP1-PRKN pathways. Acts as a key regulator of TGF-beta receptor signaling pathway, but the precise mechanism is still unclear: according to a report, acts by promoting deubiquitination of monoubiquitinated R-SMADs (SMAD1, SMAD2 and/or SMAD3), thereby alleviating inhibition of R-SMADs and promoting activation of TGF-beta target genes. According to another reports, regulates the TGF-beta receptor signaling pathway by mediating deubiquitination and stabilization of TGFBR1, leading to an enhanced TGF-beta signal. Able to mediate deubiquitination of monoubiquitinated substrates, 'Lys-27'-, 'Lys-48'- and 'Lys-63'-linked polyubiquitin chains. May also regulate gene expression and/or DNA repair through the deubiquitination of histone H2B. Acts as an inhibitor of mitophagy by counteracting the action of parkin (PRKN): hydrolyzes cleavage of 'Lys-48'- and 'Lys-63'-linked polyubiquitin chains attached by parkin on target proteins such as MFN2, thereby reducing parkin's ability to drive mitophagy. Acts as an associated component of COP9 signalosome complex (CSN) and regulates different pathways via this association: regulates NF-kappa-B by mediating deubiquitination of NFKBIA and deubiquitinates substrates bound to VCP. Involved in endosome organization by mediating deubiquitination of SQSTM1: ubiquitinated SQSTM1 forms a molecular bridge that restrains cognate vesicles in the perinuclear region and its deubiquitination releases target vesicles for fast transport into the cell periphery. Acts as a negative regulator of antifungal immunity by mediating 'Lys-27'-linked deubiquitination of CARD9, thereby inactivating CARD9. In Mus musculus (Mouse), this protein is Ubiquitin carboxyl-terminal hydrolase 15 (Usp15).